A 157-amino-acid polypeptide reads, in one-letter code: Small ribosomal subunit protein uS7c (157 aa).

Belongs to the universal ribosomal protein uS7 family. As to quaternary structure, part of the 30S ribosomal subunit.

Its subcellular location is the plastid. It localises to the organellar chromatophore. Its function is as follows. One of the primary rRNA binding proteins, it binds directly to 16S rRNA where it nucleates assembly of the head domain of the 30S subunit. This chain is Small ribosomal subunit protein uS7c (rps7), found in Paulinella chromatophora.